A 757-amino-acid chain; its full sequence is Polyribonucleotide nucleotidyltransferase (757 aa).

The Mg(2+) site is built by D482 and D488. A KH domain is found at P549–M608. The region spanning G618–R686 is the S1 motif domain. Over residues E703 to N714 the composition is skewed to basic and acidic residues. Positions E703–Y757 are disordered. A compositionally biased stretch (basic residues) spans G725–R734.

It belongs to the polyribonucleotide nucleotidyltransferase family. Mg(2+) is required as a cofactor.

It localises to the cytoplasm. It catalyses the reaction RNA(n+1) + phosphate = RNA(n) + a ribonucleoside 5'-diphosphate. Its function is as follows. Involved in mRNA degradation. Catalyzes the phosphorolysis of single-stranded polyribonucleotides processively in the 3'- to 5'-direction. In Wolbachia sp. subsp. Drosophila simulans (strain wRi), this protein is Polyribonucleotide nucleotidyltransferase.